A 218-amino-acid polypeptide reads, in one-letter code: Serine/threonine-protein phosphatase 2 (218 aa).

Mn(2+) contacts are provided by D22, H24, D51, and N77. H78 (proton donor) is an active-site residue. Position 187 (H187) interacts with Mn(2+).

This sequence belongs to the PPP phosphatase family. Mn(2+) serves as cofactor.

The enzyme catalyses O-phospho-L-seryl-[protein] + H2O = L-seryl-[protein] + phosphate. The catalysed reaction is O-phospho-L-threonyl-[protein] + H2O = L-threonyl-[protein] + phosphate. In terms of biological role, has been shown, in vitro, to act on Ser, Thr and Tyr-phosphorylated substrates. The chain is Serine/threonine-protein phosphatase 2 (pphB) from Escherichia coli (strain K12).